Reading from the N-terminus, the 221-residue chain is Small ribosomal subunit protein eS8 (221 aa).

Disordered stretches follow at residues 1–41 (MGIS…LSSN) and 128–169 (TPAA…TLDP). The segment covering 8–26 (MHKRRATGGKQKAWRKKRK) has biased composition (basic residues). Basic and acidic residues predominate over residues 146-169 (EETKKSNHVTRKLEKRKEGRTLDP).

The protein belongs to the eukaryotic ribosomal protein eS8 family.

This chain is Small ribosomal subunit protein eS8 (RPS8), found in Zea mays (Maize).